The following is a 264-amino-acid chain: S-adenosylmethionine decarboxylase proenzyme (264 aa).

Serine 112 serves as the catalytic Schiff-base intermediate with substrate; via pyruvic acid. Serine 112 is subject to Pyruvic acid (Ser); by autocatalysis. The active-site Proton acceptor; for processing activity is histidine 117. Cysteine 140 acts as the Proton donor; for catalytic activity in catalysis.

It belongs to the prokaryotic AdoMetDC family. Type 2 subfamily. In terms of assembly, heterooctamer of four alpha and four beta chains arranged as a tetramer of alpha/beta heterodimers. The cofactor is pyruvate. Is synthesized initially as an inactive proenzyme. Formation of the active enzyme involves a self-maturation process in which the active site pyruvoyl group is generated from an internal serine residue via an autocatalytic post-translational modification. Two non-identical subunits are generated from the proenzyme in this reaction, and the pyruvate is formed at the N-terminus of the alpha chain, which is derived from the carboxyl end of the proenzyme. The post-translation cleavage follows an unusual pathway, termed non-hydrolytic serinolysis, in which the side chain hydroxyl group of the serine supplies its oxygen atom to form the C-terminus of the beta chain, while the remainder of the serine residue undergoes an oxidative deamination to produce ammonia and the pyruvoyl group blocking the N-terminus of the alpha chain.

The enzyme catalyses S-adenosyl-L-methionine + H(+) = S-adenosyl 3-(methylsulfanyl)propylamine + CO2. It functions in the pathway amine and polyamine biosynthesis; S-adenosylmethioninamine biosynthesis; S-adenosylmethioninamine from S-adenosyl-L-methionine: step 1/1. Its function is as follows. Catalyzes the decarboxylation of S-adenosylmethionine to S-adenosylmethioninamine (dcAdoMet), the propylamine donor required for the synthesis of the polyamines spermine and spermidine from the diamine putrescine. This chain is S-adenosylmethionine decarboxylase proenzyme, found in Salmonella typhi.